A 124-amino-acid chain; its full sequence is UPF0738 protein ABC2521 (124 aa).

Belongs to the UPF0738 family.

The polypeptide is UPF0738 protein ABC2521 (Shouchella clausii (strain KSM-K16) (Alkalihalobacillus clausii)).